A 391-amino-acid polypeptide reads, in one-letter code: Processive diacylglycerol beta-glucosyltransferase (391 aa).

Belongs to the glycosyltransferase 28 family. UgtP subfamily.

Its subcellular location is the cell membrane. The catalysed reaction is a 1,2-diacyl-3-O-(beta-D-glucopyranosyl)-sn-glycerol + UDP-alpha-D-glucose = a 1,2-diacyl-3-O-(beta-D-Glc-(1-&gt;6)-beta-D-Glc)-sn-glycerol + UDP + H(+). The enzyme catalyses a 1,2-diacyl-sn-glycerol + UDP-alpha-D-glucose = a 1,2-diacyl-3-O-(beta-D-glucopyranosyl)-sn-glycerol + UDP + H(+). The protein operates within glycolipid metabolism; diglucosyl-diacylglycerol biosynthesis. Its function is as follows. Processive glucosyltransferase involved in the biosynthesis of both the bilayer- and non-bilayer-forming membrane glucolipids. Is able to successively transfer two glucosyl residues to diacylglycerol (DAG), thereby catalyzing the formation of beta-monoglucosyl-DAG (3-O-(beta-D-glucopyranosyl)-1,2-diacyl-sn-glycerol) and beta-diglucosyl-DAG (3-O-(beta-D-glucopyranosyl-beta-(1-&gt;6)-D-glucopyranosyl)-1,2-diacyl-sn-glycerol). Beta-diglucosyl-DAG is the predominant glycolipid found in Bacillales and is also used as a membrane anchor for lipoteichoic acid (LTA). This Staphylococcus saprophyticus subsp. saprophyticus (strain ATCC 15305 / DSM 20229 / NCIMB 8711 / NCTC 7292 / S-41) protein is Processive diacylglycerol beta-glucosyltransferase.